We begin with the raw amino-acid sequence, 466 residues long: Ras GTPase-activating protein-binding protein 1 (466 aa).

Positions 11 to 133 (VGREFVRQYY…FYVHNDIFRY (123 aa)) constitute an NTF2 domain. Residues K36, K50, K59, K64, K76, and K123 each participate in a glycyl lysine isopeptide (Lys-Gly) (interchain with G-Cter in ubiquitin) cross-link. Positions 142–225 (VTEPQEESEE…EPVLEETAPE (84 aa)) are acidic disordered region. T143 bears the Phosphothreonine mark. Disordered stretches follow at residues 144 to 172 (EPQEESEEEVEEPEERQQTPEVVPDDSGT) and 184 to 243 (EEHL…QTVQ). 2 stretches are compositionally biased toward acidic residues: residues 145–157 (PQEESEEEVEEPE) and 185–206 (EHLEEPVAEPEPDPEPEPEQEP). S149 is subject to Phosphoserine. Phosphoserine occurs at positions 231, 232, 250, and 253. Residues 255–329 (TSKNLPPSGA…REAGEQGDIE (75 aa)) form a disordered region. 2 stretches are compositionally biased toward basic and acidic residues: residues 297-307 (PQRDQRVREQR) and 318-329 (PIREAGEQGDIE). An RRM domain is found at 340–415 (HQLFIGNLPH…VRLNVEEKKT (76 aa)). Glycyl lysine isopeptide (Lys-Gly) (interchain with G-Cter in ubiquitin) cross-links involve residues K353 and K357. At S373 the chain carries Phosphoserine. A Glycyl lysine isopeptide (Lys-Gly) (interchain with G-Cter in ubiquitin) cross-link involves residue K376. Position 376 is an N6-acetyllysine; alternate (K376). Residue K376 forms a Glycyl lysine isopeptide (Lys-Gly) (interchain with G-Cter in SUMO2); alternate linkage. K393 is covalently cross-linked (Glycyl lysine isopeptide (Lys-Gly) (interchain with G-Cter in ubiquitin); alternate). The tract at residues 410 to 466 (VEEKKTRAAREGDRRDNRLRGPGGPRGGLGGGMRGPPRGGMVQKPGFGVGRGLAPRQ) is RG-rich region. Over residues 413–428 (KKTRAAREGDRRDNRL) the composition is skewed to basic and acidic residues. The tract at residues 413–466 (KKTRAAREGDRRDNRLRGPGGPRGGLGGGMRGPPRGGMVQKPGFGVGRGLAPRQ) is disordered. R429 is subject to Asymmetric dimethylarginine. Residues 430-447 (GPGGPRGGLGGGMRGPPR) show a composition bias toward gly residues. Asymmetric dimethylarginine; alternate is present on R435. Residue R435 is modified to Dimethylated arginine; alternate. Position 435 is an omega-N-methylarginine; alternate (R435). R447 carries the post-translational modification Omega-N-methylarginine. R460 is subject to Dimethylated arginine; alternate. R460 carries the post-translational modification Omega-N-methylarginine; alternate. R465 bears the Omega-N-methylarginine mark.

As to quaternary structure, homodimer and oligomer. Component of a TAU mRNP complex, at least composed of IGF2BP1, ELAVL4 and G3BP1. Binds to the SH3 domain of Ras GTPase-activating protein (RASA1) in proliferating cells. No interaction in quiescent cells. Interacts (via NTF2 domain) with USP10; inhibiting stress granule formation by lowering G3BP1 valence. Interacts (via NTF2 domain) with CAPRIN1; promoting stress granule formation by lowering the saturation-concentration of G3BP1. Interacts (via NTF2 domain) with UBAP2L; promoting stress granule formation. Associates (via RG-rich region) with 40S ribosome subunits. Interacts with RPTOR and SPAG5; this complex is increased by oxidative stress. Interacts with ATXN2L. Interacts with STYXL1. Interacts with CGAS (via N-terminus); this interaction promotes the DNA-binding and activation of CGAS. Interacts (via C-terminus) with RIGI. Interacts with PABPC1. Interacts with QKI (isoforms QKI6 and QKI7); directing N(7)-methylguanine-containing mRNAs to stress granules. In terms of assembly, (Microbial infection) Interacts with Semliki forest virus non-structural protein 3 (via C-terminus); this interaction inhibits the formation of stress granules on viral mRNAs and the nsp3-G3BP1 complexes bind viral RNAs and probably orchestrate the assembly of viral replication complexes. (Microbial infection) Interacts with Chikungunya virus non-structural protein 3 (via C-terminus); this interaction inhibits the formation of stress granules on viral mRNAs and the nsp3-G3BP1 complexes bind viral RNAs and probably orchestrate the assembly of viral replication complexes. As to quaternary structure, (Microbial infection) Interacts with Sindbis virus non-structural protein 3 (via C-terminus); this interaction inhibits the formation of stress granules on viral mRNAs and the nsp3-G3BP1 complexes bind viral RNAs and probably orchestrate the assembly of viral replication complexes. In terms of assembly, (Microbial infection) Interacts with Zika virus capsid protein C; this interaction is probably linked to the inhibition of stress granules formation by the virus. (Microbial infection) Interacts with reovirus type 2 protein sigma-NS; this interaction induces the relocalization of G3BP1 to the outer periphery of sigma-NS/mu-Ns viral factories and is probably involved in the suppression of the integrated stress response by the virus. As to quaternary structure, (Microbial infection) Interacts with SARS-CoV-2 N protein; the interaction is enhanced by host HDAC6 which deacetylates the viral N protein and promotes N protein association with G3BP1, disrupting stress granule formation and facilitating viral replication. Interacts with HDAC6; the interaction increases during SARS-CoV-2 infection. Mg(2+) is required as a cofactor. Phosphorylation of the acidic disordered region regulates stress granule assembly. RASA1-dependent phosphorylation of Ser-149 induces a conformational change that prevents self-association. Dephosphorylation after HRAS activation is required for stress granule assembly. Ser-149 phosphorylation induces partial nuclear localization. In terms of processing, ubiquitinated by TRIM21 via 'Lys-63'-linked polyubiquitination in the NTF2 domain in response to heat shock, leading to stress granule disassembly: ubiquitination promotes interaction with the FAF2 adapter, followed by interaction with VCP, which extracts G3BP1 from stress granules, leading to stress granule disassembly. In case of prolonged stress, ubiquitination by TRIM21 leads to autophagy-dependent degradation of G3BP1 via recruitment of ubiquitinated G3BP1 by SQSTM1 and/or CALCOCO2 to autophagosomes. Post-translationally, (Microbial infection) Cleaved by human enterovirus 71; this cleavage induces the disassembly of cytoplasmic stress granules. Cleaved by Foot-and-mouth disease virus; this cleavage suppresses the formation of cytoplasmic stress granules. Arg-435 is dimethylated, probably to asymmetric dimethylarginine. In terms of processing, (Microbial infection) Cleaved by Encephalomyocarditis virus protease 3C; this cleavage suppresses the formation of cytoplasmic stress granules. In terms of tissue distribution, ubiquitous.

The protein localises to the cytoplasm. It is found in the cytosol. The protein resides in the perikaryon. Its subcellular location is the stress granule. It localises to the nucleus. It catalyses the reaction ATP + H2O = ADP + phosphate + H(+). With respect to regulation, under physiological conditions, G3BP1 adopts a compact state that is stabilized by intramolecular interactions between the RG-rich and the acidic regions that inhibit phase separation. Upon stress, polysomes disassemble and mRNAs are released in an unfolded protein-free state. Binding of unfolded mRNA to G3BP1 outcompetes the intramolecular interactions and RNA-bound G3BP1 adopts an expanded conformation in which the RG-rich region becomes exposed to engage in protein-protein and protein-RNA interactions, allowing physical cross-linking of RNA molecules to form protein-RNA condensates, leading to liquid-liquid phase separation (LLPS). In terms of biological role, protein involved in various processes, such as stress granule formation and innate immunity. Plays an essential role in stress granule formation. Stress granules are membraneless compartments that store mRNAs and proteins, such as stalled translation pre-initiation complexes, in response to stress. Promotes formation of stress granules phase-separated membraneless compartment by undergoing liquid-liquid phase separation (LLPS) upon unfolded RNA-binding: functions as a molecular switch that triggers RNA-dependent LLPS in response to a rise in intracellular free RNA concentrations. Also acts as an ATP- and magnesium-dependent helicase: unwinds DNA/DNA, RNA/DNA, and RNA/RNA substrates with comparable efficiency. Acts unidirectionally by moving in the 5' to 3' direction along the bound single-stranded DNA. Unwinds preferentially partial DNA and RNA duplexes having a 17 bp annealed portion and either a hanging 3' tail or hanging tails at both 5'- and 3'-ends. Plays an essential role in innate immunity by promoting CGAS and RIGI activity. Participates in the DNA-triggered cGAS/STING pathway by promoting the DNA binding and activation of CGAS. Triggers the condensation of cGAS, a process probably linked to the formation of membrane-less organelles. Also enhances RIGI-induced type I interferon production probably by helping RIGI at sensing pathogenic RNA. May also act as a phosphorylation-dependent sequence-specific endoribonuclease in vitro: Cleaves exclusively between cytosine and adenine and cleaves MYC mRNA preferentially at the 3'-UTR. This chain is Ras GTPase-activating protein-binding protein 1, found in Homo sapiens (Human).